Reading from the N-terminus, the 547-residue chain is Ganoderic acid synthetase CYP5150L8 (547 aa).

The helical transmembrane segment at 2–22 (PDSSLVLVAIAGAAYIFWLVF) threads the bilayer. Cysteine 487 contributes to the heme binding site.

It belongs to the cytochrome P450 family. It depends on heme as a cofactor.

It is found in the membrane. The catalysed reaction is lanosterol + reduced [NADPH--hemoprotein reductase] + O2 = 26-hydroxylanosterol + oxidized [NADPH--hemoprotein reductase] + H2O + H(+). It catalyses the reaction 26-hydroxylanosterol + reduced [NADPH--hemoprotein reductase] + O2 = 26-oxolanosterol + oxidized [NADPH--hemoprotein reductase] + 2 H2O + H(+). It carries out the reaction 26-oxolanosterol + reduced [NADPH--hemoprotein reductase] + O2 = 3beta-hydroxy-lanosta-8, 24-dien-26-oate + oxidized [NADPH--hemoprotein reductase] + H2O + 2 H(+). It participates in secondary metabolite biosynthesis; terpenoid biosynthesis. Functionally, cytochrome P450 monooxygenase that is involved in the biosynthesis of ganoderic acids (GA), a group of highly oxygenated lanostane-type triterpenoids which well recognized as a main group of unique bioactive compounds in the medicinal mushroom Ganoderma lucidum. CYP5150L8 alone is able to catalyze the three-step oxidations at C-26 from lanosterol to 3-hydroxy-lanosta-8,24-dien-26-oic acid (also called ganoderic acid Z or HLDOA). The methyl group of lanosterol at C-26 is first oxidized into hydroxyl group to form 3-hydroxy-lanosta-8,24-dien-26-ol (HLDO). The hydroxyl group at C-26 of HLDO is further converted into a formyl group to form 3-hydroxy-lanosta-8,24-dien-26-al (HLDA). Finally, the formyl group is oxidized into a carboxyl group to produce 3-hydroxy-lanosta-8,24-dien-26-oic acid (HLDOA). In Ganoderma lucidum (Ling zhi medicinal fungus), this protein is Ganoderic acid synthetase CYP5150L8.